We begin with the raw amino-acid sequence, 319 residues long: Thioredoxin reductase (319 aa).

E37–Q44 lines the FAD pocket. Residues C136 and C139 are joined by a disulfide bond. D279–I288 contributes to the FAD binding site.

The protein belongs to the class-II pyridine nucleotide-disulfide oxidoreductase family. As to quaternary structure, homodimer. It depends on FAD as a cofactor.

The protein localises to the cytoplasm. It carries out the reaction [thioredoxin]-dithiol + NADP(+) = [thioredoxin]-disulfide + NADPH + H(+). The sequence is that of Thioredoxin reductase (trxB) from Listeria monocytogenes serovar 1/2a (strain ATCC BAA-679 / EGD-e).